Reading from the N-terminus, the 834-residue chain is Periplasmic nitrate reductase (834 aa).

Positions 1 to 29 (MNLTRREFAKANAAAIAAAAAGLPILVRA) form a signal peptide, tat-type signal. Residues 41 to 97 (LVWNKAPCRFCGTGCSVMVATRDGQVVATHGDIKAEVNRGINCVKGYFLSKIMYGSD) enclose the 4Fe-4S Mo/W bis-MGD-type domain. [4Fe-4S] cluster is bound by residues Cys48, Cys51, Cys55, and Cys83. Residues Lys85, Gln152, Asn177, Cys181, 214-221 (WGSNMAEM), 245-249 (STFEH), 264-266 (QTD), Met375, Gln379, Asn485, 511-512 (SD), Lys534, Asp561, and 721-730 (TGRVLEHWHT) each bind Mo-bis(molybdopterin guanine dinucleotide). Substrate is bound at residue Phe797. The Mo-bis(molybdopterin guanine dinucleotide) site is built by Asn805 and Lys822.

Belongs to the prokaryotic molybdopterin-containing oxidoreductase family. NasA/NapA/NarB subfamily. As to quaternary structure, component of the periplasmic nitrate reductase NapAB complex composed of NapA and NapB. [4Fe-4S] cluster serves as cofactor. Mo-bis(molybdopterin guanine dinucleotide) is required as a cofactor. Predicted to be exported by the Tat system. The position of the signal peptide cleavage has not been experimentally proven.

The protein localises to the periplasm. The catalysed reaction is 2 Fe(II)-[cytochrome] + nitrate + 2 H(+) = 2 Fe(III)-[cytochrome] + nitrite + H2O. In terms of biological role, catalytic subunit of the periplasmic nitrate reductase complex NapAB. Receives electrons from NapB and catalyzes the reduction of nitrate to nitrite. This is Periplasmic nitrate reductase from Pseudomonas aeruginosa (strain UCBPP-PA14).